The following is a 537-amino-acid chain: Chaperonin GroEL (537 aa).

Residues 29 to 32 (TLGP), 86 to 90 (DGTTT), G413, 477 to 479 (NAA), and D493 contribute to the ATP site.

Belongs to the chaperonin (HSP60) family. As to quaternary structure, forms a cylinder of 14 subunits composed of two heptameric rings stacked back-to-back. Interacts with the co-chaperonin GroES.

The protein resides in the cytoplasm. It carries out the reaction ATP + H2O + a folded polypeptide = ADP + phosphate + an unfolded polypeptide.. Its function is as follows. Together with its co-chaperonin GroES, plays an essential role in assisting protein folding. The GroEL-GroES system forms a nano-cage that allows encapsulation of the non-native substrate proteins and provides a physical environment optimized to promote and accelerate protein folding. The protein is Chaperonin GroEL of Lactobacillus delbrueckii subsp. bulgaricus (strain ATCC 11842 / DSM 20081 / BCRC 10696 / JCM 1002 / NBRC 13953 / NCIMB 11778 / NCTC 12712 / WDCM 00102 / Lb 14).